Consider the following 280-residue polypeptide: 3-hydroxyacyl-thioester dehydratase X (280 aa).

The disordered stretch occupies residues 149–170; sequence QRTSLSGEPKPPPQKKPKLPPP. The MaoC-like domain occupies 162–256; that stretch reads QKKPKLPPPA…TAGLYVAEGD (95 aa).

This sequence belongs to the enoyl-CoA hydratase/isomerase family.

It carries out the reaction a (3R)-3-hydroxyacyl-CoA = a (2E)-enoyl-CoA + H2O. It catalyses the reaction (2E)-octenoyl-CoA + H2O = (3R)-hydroxyoctanoyl-CoA. The catalysed reaction is (3R)-3-hydroxydodecanoyl-CoA = (2E)-dodecenoyl-CoA + H2O. The enzyme catalyses (3R)-hydroxyhexadecanoyl-CoA = (2E)-hexadecenoyl-CoA + H2O. It carries out the reaction (3R)-hydroxyeicosanoyl-CoA = (2E)-eicosenoyl-CoA + H2O. It catalyses the reaction (3R)-3-hydroxybutanoyl-CoA = (2E)-butenoyl-CoA + H2O. In terms of biological role, shows trans-enoyl-CoA hydratase/3-hydroxyacyl-CoA dehydratase activity. Displays a broad chain length specificity, with a predilection for the C8 to C12 substrates. This Mycobacterium tuberculosis (strain ATCC 25618 / H37Rv) protein is 3-hydroxyacyl-thioester dehydratase X.